Consider the following 230-residue polypeptide: Endonuclease NucS (230 aa).

This sequence belongs to the NucS endonuclease family.

It is found in the cytoplasm. Functionally, cleaves both 3' and 5' ssDNA extremities of branched DNA structures. This chain is Endonuclease NucS, found in Corynebacterium efficiens (strain DSM 44549 / YS-314 / AJ 12310 / JCM 11189 / NBRC 100395).